A 522-amino-acid chain; its full sequence is Man(5)GlcNAc(2)-PP-dolichol translocation protein RFT1 (522 aa).

10 helical membrane-spanning segments follow: residues 35–55 (DVLGLVNVRLTLLYSSILFLT), 75–95 (LLWLSPIISTVISVVCVYLWY), 108–128 (VLLSFPISAIIESIAEPFSVI), 143–165 (FAIGQGMLICVKRIFVLAGLFMF), 177–197 (AQYIGAIAYLLFNFVAFYIYI), 322–342 (VVGVIGFVACTFGIPYSPVVI), 354–374 (GGALLLSLYSGYILVTAINGI), 400–420 (IIHLIINYVLCVYMNSAGFIV), 457–477 (TSIFLGVSLLATSFTYLLFAT), and 479–499 (PGLSYTLAHIAIGAVCLILTA).

It belongs to the RFT1 family.

Its subcellular location is the endoplasmic reticulum membrane. It participates in protein modification; protein glycosylation. In terms of biological role, intramembrane glycolipid transporter that operates in the biosynthetic pathway of dolichol-linked oligosaccharides, the glycan precursors employed in protein asparagine (N)-glycosylation. The sequential addition of sugars to dolichol pyrophosphate produces dolichol-linked oligosaccharides containing fourteen sugars, including two GlcNAcs, nine mannoses and three glucoses. Once assembled, the oligosaccharide is transferred from the lipid to nascent proteins by oligosaccharyltransferases. The assembly of dolichol-linked oligosaccharides begins on the cytosolic side of the endoplasmic reticulum membrane and finishes in its lumen. RFT1 could mediate the translocation of the cytosolically oriented intermediate DolPP-GlcNAc2Man5, produced by ALG11, into the ER lumen where dolichol-linked oligosaccharides assembly continues. However, the intramembrane lipid transporter activity could not be confirmed in vitro. This chain is Man(5)GlcNAc(2)-PP-dolichol translocation protein RFT1, found in Caenorhabditis elegans.